Here is a 314-residue protein sequence, read N- to C-terminus: Hydroxyacyl-coenzyme A dehydrogenase, mitochondrial (314 aa).

The transit peptide at 1 to 12 directs the protein to the mitochondrion; it reads MAFVTRQFMRSV. NAD(+) is bound by residues 34–39 and aspartate 57; that span reads GGGLMG. Residues serine 73 and lysine 80 each coordinate CoA. Lysine 80 carries the post-translational modification N6-succinyllysine. Residues lysine 81 and lysine 87 each carry the N6-acetyllysine; alternate modification. Residues lysine 81 and lysine 87 each carry the N6-succinyllysine; alternate modification. Glutamate 122 lines the NAD(+) pocket. Lysine 125 is modified (N6-acetyllysine). Lysine 127 provides a ligand contact to NAD(+). At lysine 127 the chain carries N6-(2-hydroxyisobutyryl)lysine. At lysine 136 the chain carries N6-acetyllysine; alternate. Lysine 136 is subject to N6-succinyllysine; alternate. Serine 149 and asparagine 173 together coordinate NAD(+). A CoA-binding site is contributed by serine 149. Lysine 179 bears the N6-acetyllysine mark. Lysine 185, lysine 192, and lysine 202 each carry N6-acetyllysine; alternate. Residues lysine 185, lysine 192, and lysine 202 each carry the N6-succinyllysine; alternate modification. An N6-succinyllysine modification is found at lysine 206. Residues lysine 212 and lysine 241 each carry the N6-acetyllysine; alternate modification. N6-succinyllysine; alternate occurs at positions 212 and 241. Position 305 (lysine 305) interacts with NAD(+). Residue lysine 312 is modified to N6-acetyllysine; alternate. Lysine 312 carries the N6-succinyllysine; alternate modification.

Belongs to the 3-hydroxyacyl-CoA dehydrogenase family. As to quaternary structure, homodimer. Interacts with GLUD1; this interaction inhibits the activation of glutamate dehydrogenase 1 (GLUD1). Post-translationally, succinylation at Lys-81, adjacent to a coenzyme A binding site. Desuccinylated by SIRT5. As to expression, expressed in liver, kidney, pancreas, heart and skeletal muscle.

The protein localises to the mitochondrion matrix. The catalysed reaction is a (3S)-3-hydroxyacyl-CoA + NAD(+) = a 3-oxoacyl-CoA + NADH + H(+). It catalyses the reaction (3S)-3-hydroxybutanoyl-CoA + NAD(+) = acetoacetyl-CoA + NADH + H(+). The enzyme catalyses (3S)-hydroxydecanoyl-CoA + NAD(+) = 3-oxodecanoyl-CoA + NADH + H(+). It carries out the reaction (3S)-hydroxyhexadecanoyl-CoA + NAD(+) = 3-oxohexadecanoyl-CoA + NADH + H(+). It functions in the pathway lipid metabolism; fatty acid beta-oxidation. In terms of biological role, mitochondrial fatty acid beta-oxidation enzyme that catalyzes the third step of the beta-oxidation cycle for medium and short-chain 3-hydroxy fatty acyl-CoAs (C4 to C10). Plays a role in the control of insulin secretion by inhibiting the activation of glutamate dehydrogenase 1 (GLUD1), an enzyme that has an important role in regulating amino acid-induced insulin secretion. Plays a role in the maintenance of normal spermatogenesis through the reduction of fatty acid accumulation in the testes. This is Hydroxyacyl-coenzyme A dehydrogenase, mitochondrial (HADH) from Homo sapiens (Human).